The chain runs to 727 residues: 1,4-alpha-glucan branching enzyme GlgB (727 aa).

Asp405 functions as the Nucleophile in the catalytic mechanism. Glu458 acts as the Proton donor in catalysis.

This sequence belongs to the glycosyl hydrolase 13 family. GlgB subfamily. As to quaternary structure, monomer.

The enzyme catalyses Transfers a segment of a (1-&gt;4)-alpha-D-glucan chain to a primary hydroxy group in a similar glucan chain.. Its pathway is glycan biosynthesis; glycogen biosynthesis. Functionally, catalyzes the formation of the alpha-1,6-glucosidic linkages in glycogen by scission of a 1,4-alpha-linked oligosaccharide from growing alpha-1,4-glucan chains and the subsequent attachment of the oligosaccharide to the alpha-1,6 position. This Yersinia pseudotuberculosis serotype I (strain IP32953) protein is 1,4-alpha-glucan branching enzyme GlgB.